The chain runs to 176 residues: Inorganic pyrophosphatase (176 aa).

Substrate-binding residues include K31, R45, and Y57. Positions 67, 72, and 104 each coordinate Mg(2+). Position 141 (Y141) interacts with substrate.

It belongs to the PPase family. Homohexamer. It depends on Mg(2+) as a cofactor.

It localises to the cytoplasm. It carries out the reaction diphosphate + H2O = 2 phosphate + H(+). Its function is as follows. Catalyzes the hydrolysis of inorganic pyrophosphate (PPi) forming two phosphate ions. This is Inorganic pyrophosphatase from Methanopyrus kandleri (strain AV19 / DSM 6324 / JCM 9639 / NBRC 100938).